A 455-amino-acid polypeptide reads, in one-letter code: N(6)-adenosine-methyltransferase non-catalytic subunit METTL14 (455 aa).

The interval 21–96 is disordered; it reads QQLGAESPDS…QHQEESGPYE (76 aa). Basic and acidic residues predominate over residues 37–51; sequence SKDEQKEIEETRETC. Acidic residues predominate over residues 69 to 82; the sequence is EGEDPEEDVEEQKE. Interaction with METTL3 regions lie at residues 134–135 and 236–237; these read RD and SG. The segment at 244–253 is positively charged region required for RNA-binding; the sequence is RMCLRKWGFR. Interaction with METTL3 stretches follow at residues 254–257 and 277–286; these read RCED and KAVFQRTKEH. The interval 296 to 297 is positively charged region required for RNA-binding; it reads RR. The tract at residues 307–311 is interaction with METTL3; that stretch reads NVDID. The interval 392-455 is disordered; that stretch reads ERLRPKSPPP…GGPHRGFPPR (64 aa). The segment covering 407–421 has biased composition (gly residues); that stretch reads RGGGAPRGGRGGPAA. Over residues 423–441 the composition is skewed to basic and acidic residues; it reads RGDRGRERNRPNFRGDRGG.

Belongs to the MT-A70-like family. In terms of assembly, heterodimer; heterodimerizes with mettl3 to form an antiparallel heterodimer that constitutes an active methyltransferase. Component of the WMM complex, a N6-methyltransferase complex composed of a catalytic subcomplex, named MAC, and of an associated subcomplex, named MACOM. The MAC subcomplex is composed of mettl3 and mettl14.

The protein localises to the nucleus. Its function is as follows. The METTL3-METTL14 heterodimer forms a N6-methyltransferase complex that methylates adenosine residues at the N(6) position of some mRNAs and regulates the circadian clock, differentiation of embryonic stem cells and cortical neurogenesis. In the heterodimer formed with mettl3, mettl14 constitutes the RNA-binding scaffold that recognizes the substrate rather than the catalytic core. N6-methyladenosine (m6A), which takes place at the 5'-[AG]GAC-3' consensus sites of some mRNAs, plays a role in mRNA stability and processing. The chain is N(6)-adenosine-methyltransferase non-catalytic subunit METTL14 (mettl14) from Danio rerio (Zebrafish).